An 82-amino-acid polypeptide reads, in one-letter code: Sec-independent protein translocase protein TatA (82 aa).

The chain crosses the membrane as a helical span at residues 1-21; it reads MGGISIWQLLIIAVIVVLLFG.

It belongs to the TatA/E family. As to quaternary structure, the Tat system comprises two distinct complexes: a TatABC complex, containing multiple copies of TatA, TatB and TatC subunits, and a separate TatA complex, containing only TatA subunits. Substrates initially bind to the TatABC complex, which probably triggers association of the separate TatA complex to form the active translocon.

Its subcellular location is the cell inner membrane. In terms of biological role, part of the twin-arginine translocation (Tat) system that transports large folded proteins containing a characteristic twin-arginine motif in their signal peptide across membranes. TatA could form the protein-conducting channel of the Tat system. The protein is Sec-independent protein translocase protein TatA of Vibrio cholerae serotype O1 (strain ATCC 39315 / El Tor Inaba N16961).